The chain runs to 240 residues: MSHSISPIGHVRSCFKEKFAIPRQPQLAPAATGVLELLPPFDTGDAVEGLEQVSHVWLIFLFHQALEDKPRLKVRPPRLGGNQSMGVFATRATHRPNGLGQSVVKLEKVEPGRLWLSGIDLLDGTPVIDIKPYVPYADIVPDAHNAIADAPPSSIAVHWSDEALRQAHEHGLRLCQPVRELVGNASPRTRARPTRSRRPSAAMACACGTSTCTGTTPPMARSACWTCNAPPTETSLSPQD.

The TsaA-like domain occupies 5-142 (ISPIGHVRSC…YVPYADIVPD (138 aa)). S-adenosyl-L-methionine is bound by residues 22–24 (PRQ), 63–64 (HQ), Arg-91, and 122–125 (LDGT).

The protein belongs to the tRNA methyltransferase O family.

The chain is Putative S-adenosylmethionine-dependent methyltransferase RcsF (rcsF) from Pseudomonas aeruginosa.